The primary structure comprises 358 residues: Probable tartrate dehydrogenase/decarboxylase TtuC' (358 aa).

Residues Asp222, Asp246, and Asp250 each coordinate Mn(2+).

Belongs to the isocitrate and isopropylmalate dehydrogenases family. It depends on Mg(2+) as a cofactor. Requires Mn(2+) as cofactor. The cofactor is K(+).

It localises to the cytoplasm. The catalysed reaction is tartrate + NAD(+) = 2-hydroxy-3-oxosuccinate + NADH + H(+). It carries out the reaction (2R,3S)-tartrate + NAD(+) = 2-hydroxy-3-oxosuccinate + NADH + H(+). The enzyme catalyses (2R,3R)-tartrate + NAD(+) = 2-hydroxy-3-oxosuccinate + NADH + H(+). It catalyses the reaction (2R,3R)-tartrate + H(+) = (R)-glycerate + CO2. The catalysed reaction is (R)-malate + NAD(+) = pyruvate + CO2 + NADH. The protein operates within carbohydrate acid metabolism; tartrate degradation; 2-hydroxy-3-oxosuccinate from L-tartrate: step 1/1. It participates in carbohydrate acid metabolism; tartrate degradation; 2-hydroxy-3-oxosuccinate from meso-tartrate: step 1/1. It functions in the pathway carbohydrate acid metabolism; tartrate degradation; D-glycerate from L-tartrate: step 1/1. In terms of biological role, has multiple catalytic activities. Apart from catalyzing the oxidation of (+)-tartrate to oxaloglycolate, also converts meso-tartrate to D-glycerate and catalyzes the oxidative decarboxylation of D-malate to pyruvate. In Agrobacterium vitis (Rhizobium vitis), this protein is Probable tartrate dehydrogenase/decarboxylase TtuC' (ttuC').